Consider the following 559-residue polypeptide: Dihydroxy-acid dehydratase (559 aa).

D80 contacts Mg(2+). C121 provides a ligand contact to [2Fe-2S] cluster. Mg(2+)-binding residues include D122 and K123. An N6-carboxylysine modification is found at K123. C194 is a [2Fe-2S] cluster binding site. Residue E447 participates in Mg(2+) binding. S473 (proton acceptor) is an active-site residue.

This sequence belongs to the IlvD/Edd family. As to quaternary structure, homodimer. Requires [2Fe-2S] cluster as cofactor. The cofactor is Mg(2+).

The enzyme catalyses (2R)-2,3-dihydroxy-3-methylbutanoate = 3-methyl-2-oxobutanoate + H2O. It catalyses the reaction (2R,3R)-2,3-dihydroxy-3-methylpentanoate = (S)-3-methyl-2-oxopentanoate + H2O. The protein operates within amino-acid biosynthesis; L-isoleucine biosynthesis; L-isoleucine from 2-oxobutanoate: step 3/4. It functions in the pathway amino-acid biosynthesis; L-valine biosynthesis; L-valine from pyruvate: step 3/4. In terms of biological role, functions in the biosynthesis of branched-chain amino acids. Catalyzes the dehydration of (2R,3R)-2,3-dihydroxy-3-methylpentanoate (2,3-dihydroxy-3-methylvalerate) into 2-oxo-3-methylpentanoate (2-oxo-3-methylvalerate) and of (2R)-2,3-dihydroxy-3-methylbutanoate (2,3-dihydroxyisovalerate) into 2-oxo-3-methylbutanoate (2-oxoisovalerate), the penultimate precursor to L-isoleucine and L-valine, respectively. The polypeptide is Dihydroxy-acid dehydratase (Chlorobium chlorochromatii (strain CaD3)).